The primary structure comprises 169 residues: Unfolded protein response-inducible protein 1 (169 aa).

Functionally, involved in the unfolded protein response (UPR), a transcriptional response which up-regulates genes that enable cells to cope with misfolded, endoplasmic reticulum-retained proteins. UPR is part of the endoplasmic reticulum quality control (ERQC) which prevents the exit of misfolded secretory and membrane proteins from the endoplasmic reticulum. The protein is Unfolded protein response-inducible protein 1 (ULI1) of Saccharomyces cerevisiae (strain ATCC 204508 / S288c) (Baker's yeast).